Consider the following 344-residue polypeptide: MNCLMFFKMLLAFSFISLFYVGNAQQSYGNSTVSALFAFGDSILDTGNNNLLLSVSKVNFYPYGRDFIGGRATGRFGNGRVFSDIIAEGLGLKNLLPAYRDPYLWNNDLTTGVCFASGGSGLDPITARTTGSIWVSDQVTDFQNYITRLNGVVGNQEQANAVISNAVYLISAGNNDIAITYFTTGARRLQYTLPAYNDQLVSWTRDLIKSLYDMGARKFAVMGTLPLGCLPGARALTRACELFVNQGAAMFNQQLSADIDNLGATFPGAKFVYVDMYNPLLGLIINPQASGFIDVADACCCTPTHLIPCLDASRYVFWDVAHPTQKSYETIAPQIIENIKAKLA.

A signal peptide spans 1–24 (MNCLMFFKMLLAFSFISLFYVGNA). Residue asparagine 30 is glycosylated (N-linked (GlcNAc...) asparagine). Serine 42 functions as the Nucleophile in the catalytic mechanism. Active-site residues include aspartate 319 and histidine 322.

Belongs to the 'GDSL' lipolytic enzyme family.

The protein resides in the secreted. This chain is GDSL esterase/lipase At1g73610, found in Arabidopsis thaliana (Mouse-ear cress).